The following is a 1978-amino-acid chain: Dedicator of cytokinesis protein 4 (1978 aa).

The region spanning 6 to 67 (EHEKYGVVIA…PSSYVHLKNA (62 aa)) is the SH3 domain. Tyrosine 167 is modified (phosphotyrosine). Threonine 193 carries the post-translational modification Phosphothreonine. The region spanning 401-574 (RNDLYITVER…ESFWITSFLC (174 aa)) is the C2 DOCK-type domain. Residues 1199 to 1605 (KTELNKEEMY…FGIQEFPACI (407 aa)) enclose the DOCKER domain. Phosphoserine is present on residues serine 1608, serine 1616, serine 1623, serine 1627, serine 1629, and serine 1640. Disordered regions lie at residues 1657 to 1738 (SQAS…IYPT) and 1751 to 1978 (IGDG…VSQL). Residues 1681–1712 (PSPSTSSLSSTHSASPNVTSSAPSSARASPLL) are compositionally biased toward low complexity. Residue serine 1778 is modified to Phosphoserine. The short motif at 1797–1803 (PPVPPRP) is the SH3-binding element. Residues 1804–1818 (TQTASPARHTTSVSP) show a composition bias toward polar residues. Positions 1842–1872 (SPGLSSNSPVLSGSYSSGISSLSRCSTSETS) are enriched in low complexity. Over residues 1873–1882 (GFENQANEQS) the composition is skewed to polar residues. Pro residues predominate over residues 1885–1895 (VPVPVPVPVPV). Over residues 1953-1966 (SHLENGTRRTEPGP) the composition is skewed to basic and acidic residues.

Belongs to the DOCK family. In terms of assembly, interacts with nucleotide-free Rap1; functions as a guanine nucleotide exchange factor (GEF) for Rap1. Interacts (via DOCKER domain) with RAC1; functions as a guanine nucleotide exchange factor (GEF) for RAC1. Interacts with the SH3 domain of CRK. Interacts with FASLG. Interacts with ELMO2 and EPHA2; mediates activation of RAC1 by EPHA2. Interacts with USH1C (via PDZ 1 domain). In terms of tissue distribution, expressed in inner ear (at protein level).

It localises to the cell membrane. Its subcellular location is the cytoplasm. The protein localises to the cytosol. Its function is as follows. Functions as a guanine nucleotide exchange factor (GEF) that promotes the exchange of GDP to GTP, converting inactive GDP-bound small GTPases into their active GTP-bound form. Involved in regulation of adherens junction between cells. Plays a role in cell migration. Has a higher guanine nucleotide exchange factor activity compared to other isoforms. This is Dedicator of cytokinesis protein 4 (Dock4) from Mus musculus (Mouse).